Reading from the N-terminus, the 158-residue chain is uncharacterized protein (158 aa).

The span at 1–18 (MDLASEITSATQTSSLCS) shows a compositional bias: polar residues. Disordered regions lie at residues 1–20 (MDLA…CSSG), 66–94 (LRDL…KPCL), and 111–158 (GSSG…GEEF). Low complexity predominate over residues 72-90 (RGSTSSSRSPSRPVSTSAS). Composition is skewed to polar residues over residues 111 to 120 (GSSGHLQSPG) and 149 to 158 (LSHSAQGEEF).

This is an uncharacterized protein from Homo sapiens (Human).